The following is a 444-amino-acid chain: E3 ubiquitin-protein ligase APD2 (444 aa).

Over residues 1–15 the composition is skewed to low complexity; that stretch reads MSLPDSLPSSSSSPP. Positions 1–41 are disordered; it reads MSLPDSLPSSSSSPPVTREETGFHRFEHHGNDSGFDHRDRP. Basic and acidic residues predominate over residues 17–41; the sequence is TREETGFHRFEHHGNDSGFDHRDRP. The next 2 membrane-spanning stretches (helical) occupy residues 74–94 and 312–332; these read VVVV…GLYG and IAYI…SSLF. The RING-type zinc finger occupies 393–432; the sequence is CAICYDAPRDCFFLSCGHCVACFQCGTRIAETSGFCPVCR.

Interacts with At1g78040, At1g10650, VHA-c4/AVAP4, VHA-c''2/VMA16 and TUFA. As to expression, expressed in the shoot apical meristems (SAM), root tips, pollen and inflorescences.

The protein localises to the endomembrane system. It catalyses the reaction S-ubiquitinyl-[E2 ubiquitin-conjugating enzyme]-L-cysteine + [acceptor protein]-L-lysine = [E2 ubiquitin-conjugating enzyme]-L-cysteine + N(6)-ubiquitinyl-[acceptor protein]-L-lysine.. It functions in the pathway protein modification; protein ubiquitination. Its function is as follows. Exhibits E2-dependent E3 ligase activity. Involved in pollen mitosis II (PMII) regulation during male gametogenesis. This Arabidopsis thaliana (Mouse-ear cress) protein is E3 ubiquitin-protein ligase APD2.